Consider the following 505-residue polypeptide: 2,3-bisphosphoglycerate-independent phosphoglycerate mutase (505 aa).

Residues Asp12 and Ser62 each contribute to the Mn(2+) site. The Phosphoserine intermediate role is filled by Ser62. Residues His123, 153-154, Arg185, Arg191, 257-260, and Lys330 contribute to the substrate site; these read RD and RPDR. Mn(2+) contacts are provided by Asp397, His401, Asp438, His439, and His456.

The protein belongs to the BPG-independent phosphoglycerate mutase family. Monomer. The cofactor is Mn(2+).

The enzyme catalyses (2R)-2-phosphoglycerate = (2R)-3-phosphoglycerate. It functions in the pathway carbohydrate degradation; glycolysis; pyruvate from D-glyceraldehyde 3-phosphate: step 3/5. In terms of biological role, catalyzes the interconversion of 2-phosphoglycerate and 3-phosphoglycerate. This is 2,3-bisphosphoglycerate-independent phosphoglycerate mutase from Staphylococcus aureus (strain MRSA252).